Consider the following 316-residue polypeptide: Aspartate carbamoyltransferase catalytic subunit (316 aa).

Carbamoyl phosphate-binding residues include R58 and T59. K86 serves as a coordination point for L-aspartate. Carbamoyl phosphate is bound by residues R108, H136, and Q139. R169 and R223 together coordinate L-aspartate. Carbamoyl phosphate contacts are provided by G265 and P266.

Belongs to the aspartate/ornithine carbamoyltransferase superfamily. ATCase family. In terms of assembly, heterododecamer (2C3:3R2) of six catalytic PyrB chains organized as two trimers (C3), and six regulatory PyrI chains organized as three dimers (R2).

It carries out the reaction carbamoyl phosphate + L-aspartate = N-carbamoyl-L-aspartate + phosphate + H(+). The protein operates within pyrimidine metabolism; UMP biosynthesis via de novo pathway; (S)-dihydroorotate from bicarbonate: step 2/3. Its function is as follows. Catalyzes the condensation of carbamoyl phosphate and aspartate to form carbamoyl aspartate and inorganic phosphate, the committed step in the de novo pyrimidine nucleotide biosynthesis pathway. In Anaeromyxobacter sp. (strain Fw109-5), this protein is Aspartate carbamoyltransferase catalytic subunit.